The sequence spans 251 residues: Flap endonuclease Xni (251 aa).

A Mg(2+)-binding site is contributed by Asp-104. A 5'-3' exonuclease domain is found at 160–249 (VLPRQLPDYW…IDGNLQQLRL (90 aa)). K(+)-binding residues include Leu-171, Ala-172, Pro-180, Val-182, and Ile-185. The interaction with DNA stretch occupies residues 184–189 (GIGPKS).

The protein belongs to the Xni family. Mg(2+) serves as cofactor. It depends on K(+) as a cofactor.

Functionally, has flap endonuclease activity. During DNA replication, flap endonucleases cleave the 5'-overhanging flap structure that is generated by displacement synthesis when DNA polymerase encounters the 5'-end of a downstream Okazaki fragment. This Salmonella paratyphi A (strain ATCC 9150 / SARB42) protein is Flap endonuclease Xni.